Here is a 222-residue protein sequence, read N- to C-terminus: Interleukin-12 subunit alpha (222 aa).

The first 25 residues, 1–25 (MCPPRGLLLVTILVLLNHLDHLSLA), serve as a signal peptide directing secretion. 3 disulfides stabilise this stretch: Cys40-Cys113, Cys67-Cys199, and Cys88-Cys126. N-linked (GlcNAc...) asparagine glycans are attached at residues Asn42, Asn96, Asn110, and Asn183.

Belongs to the IL-6 superfamily. Heterodimer with IL12B; disulfide-linked. This heterodimer is known as interleukin IL-12. Heterodimer with EBI3/IL27B; not disulfide-linked. This heterodimer is known as interleukin IL-35. Interacts with NBR1; this interaction promotes IL-12 secretion.

The protein localises to the secreted. Heterodimerizes with IL12B to form the IL-12 cytokine or with EBI3/IL27B to form the IL-35 cytokine. IL-12 is primarily produced by professional antigen-presenting cells (APCs) such as B-cells and dendritic cells (DCs) as well as macrophages and granulocytes and regulates T-cell and natural killer-cell responses, induces the production of interferon-gamma (IFN-gamma), favors the differentiation of T-helper 1 (Th1) cells and is an important link between innate resistance and adaptive immunity. Mechanistically, exerts its biological effects through a receptor composed of IL12R1 and IL12R2 subunits. Binding to the receptor results in the rapid tyrosine phosphorylation of a number of cellular substrates including the JAK family kinases TYK2 and JAK2. In turn, recruited STAT4 gets phosphorylated and translocates to the nucleus where it regulates cytokine/growth factor responsive genes. As part of IL-35, plays essential roles in maintaining the immune homeostasis of the liver microenvironment and also functions as an immune-suppressive cytokine. Mediates biological events through unconventional receptors composed of IL12RB2 and gp130/IL6ST heterodimers or homodimers. Signaling requires the transcription factors STAT1 and STAT4, which form a unique heterodimer that binds to distinct DNA sites. In Felis catus (Cat), this protein is Interleukin-12 subunit alpha (IL12A).